The sequence spans 222 residues: MEVVSLPRLGEPAPAFEAQTTFGPVKFPDDFKGQWVVLFSHPADFTPVCTTEFVAFAKNYEEFKKRNVQLIGLSVDSNFSHIAWVMNIKEKFGIEIPFPIIADHNMEVAKKYGMIHPAQSTTFTVRALFVIDDKGILRAMIYYPLTTGRNIREVIRLVDALQTADREGVATPADWVPEPQTWEFTEENTKVIVPPPTTYEDAVKRLQEGYECADWYICKKKV.

In terms of domain architecture, Thioredoxin spans 7–163 (PRLGEPAPAF…VIRLVDALQT (157 aa)). Cys49 (cysteine sulfenic acid (-SOH) intermediate) is an active-site residue. Arg126 provides a ligand contact to substrate. Cys212 and Cys218 are joined by a disulfide.

It belongs to the peroxiredoxin family. Prx6 subfamily. In terms of assembly, homodecamer. Pentamer of dimers that assemble into a ring structure.

It localises to the cytoplasm. The catalysed reaction is a hydroperoxide + [thioredoxin]-dithiol = an alcohol + [thioredoxin]-disulfide + H2O. Thiol-specific peroxidase that catalyzes the reduction of hydrogen peroxide and organic hydroperoxides to water and alcohols, respectively. Plays a role in cell protection against oxidative stress by detoxifying peroxides. In Aquifex aeolicus (strain VF5), this protein is Peroxiredoxin.